Consider the following 572-residue polypeptide: Methionine--tRNA ligase (572 aa).

The 'HIGH' region signature appears at proline 11–asparagine 21. Cysteine 143, cysteine 146, cysteine 156, and cysteine 159 together coordinate Zn(2+). Positions glutamine 346 to serine 350 match the 'KMSKS' region motif. ATP is bound at residue threonine 349.

The protein belongs to the class-I aminoacyl-tRNA synthetase family. MetG type 1 subfamily. As to quaternary structure, monomer. Zn(2+) is required as a cofactor.

The protein resides in the cytoplasm. The catalysed reaction is tRNA(Met) + L-methionine + ATP = L-methionyl-tRNA(Met) + AMP + diphosphate. Is required not only for elongation of protein synthesis but also for the initiation of all mRNA translation through initiator tRNA(fMet) aminoacylation. The polypeptide is Methionine--tRNA ligase (Cereibacter sphaeroides (strain KD131 / KCTC 12085) (Rhodobacter sphaeroides)).